Reading from the N-terminus, the 695-residue chain is Elongation factor G (695 aa).

Residues 10-285 (AKTRNIGIMA…AVIDYLPSPI (276 aa)) enclose the tr-type G domain. GTP-binding positions include 19-26 (AHIDAGKT), 83-87 (DTPGH), and 137-140 (NKMD).

It belongs to the TRAFAC class translation factor GTPase superfamily. Classic translation factor GTPase family. EF-G/EF-2 subfamily.

It localises to the cytoplasm. Catalyzes the GTP-dependent ribosomal translocation step during translation elongation. During this step, the ribosome changes from the pre-translocational (PRE) to the post-translocational (POST) state as the newly formed A-site-bound peptidyl-tRNA and P-site-bound deacylated tRNA move to the P and E sites, respectively. Catalyzes the coordinated movement of the two tRNA molecules, the mRNA and conformational changes in the ribosome. This is Elongation factor G from Limosilactobacillus reuteri (strain DSM 20016) (Lactobacillus reuteri).